A 285-amino-acid chain; its full sequence is MNAHSSLLPICKKATAHIAFSKAPSGISYVSRQEVGYPFHLGRTLKLPQDPPGMAAIYLQSCSGGLFAGETLHLQLHAGPHTQVHVSTGAATVAHSMLEQPARQTVTLIAETGALLEYLPMATILFPQARLHSVVNVTLHPNARVMLCDAFCLHVPPGSAGLPGFYRADLHIRCPAGTLLAGDRLALTGADLQRRLPGVSAELQALATFMLVGQDLPVDELKRALRDALRVVPESYLGVSALPNDCGVSVRIMTADAVALRSALHLAWACARQQLTGIAPRVRRK.

Belongs to the UreD family. UreD, UreF and UreG form a complex that acts as a GTP-hydrolysis-dependent molecular chaperone, activating the urease apoprotein by helping to assemble the nickel containing metallocenter of UreC. The UreE protein probably delivers the nickel.

Its subcellular location is the cytoplasm. Its function is as follows. Required for maturation of urease via the functional incorporation of the urease nickel metallocenter. The sequence is that of Urease accessory protein UreD 1 from Pseudomonas syringae pv. tomato (strain ATCC BAA-871 / DC3000).